Reading from the N-terminus, the 960-residue chain is Valine--tRNA ligase (960 aa).

Residues 42 to 52 (PNITGNLHMGH) carry the 'HIGH' region motif. Residues 553-557 (KMSKS) carry the 'KMSKS' region motif. Lys-556 contributes to the ATP binding site. Residues 879 to 950 (VLKAIDKEIE…LSQQLESLHD (72 aa)) are a coiled coil.

It belongs to the class-I aminoacyl-tRNA synthetase family. ValS type 1 subfamily. As to quaternary structure, monomer.

It localises to the cytoplasm. The enzyme catalyses tRNA(Val) + L-valine + ATP = L-valyl-tRNA(Val) + AMP + diphosphate. In terms of biological role, catalyzes the attachment of valine to tRNA(Val). As ValRS can inadvertently accommodate and process structurally similar amino acids such as threonine, to avoid such errors, it has a 'posttransfer' editing activity that hydrolyzes mischarged Thr-tRNA(Val) in a tRNA-dependent manner. This is Valine--tRNA ligase from Buchnera aphidicola subsp. Schizaphis graminum (strain Sg).